Here is a 60-residue protein sequence, read N- to C-terminus: Pepsin A (60 aa).

A propeptide spans 1–45 (FIIKVPLVKKKSLRKNLKEHGLLKDFLKKHSPNPASKYFPQEAAV) (activation peptide).

It belongs to the peptidase A1 family.

The protein resides in the secreted. It carries out the reaction Preferential cleavage: hydrophobic, preferably aromatic, residues in P1 and P1' positions. Cleaves 1-Phe-|-Val-2, 4-Gln-|-His-5, 13-Glu-|-Ala-14, 14-Ala-|-Leu-15, 15-Leu-|-Tyr-16, 16-Tyr-|-Leu-17, 23-Gly-|-Phe-24, 24-Phe-|-Phe-25 and 25-Phe-|-Tyr-26 bonds in the B chain of insulin.. Its function is as follows. Shows particularly broad specificity; although bonds involving phenylalanine and leucine are preferred, many others are also cleaved to some extent. This chain is Pepsin A (PGA), found in Ursus thibetanus (Asiatic black bear).